Here is a 360-residue protein sequence, read N- to C-terminus: Alpha-2-macroglobulin receptor-associated protein (360 aa).

A signal peptide spans 1–28; sequence MAPRRERVSTLPRLQLLVLLLLPLMLVP. Residues serine 53 and serine 138 each carry the phosphoserine modification. Residues 184–302 are a coiled coil; the sequence is EKIQEYNVLL…KHNHYQKQLE (119 aa). The tract at residues 240–356 is LDL receptor binding; sequence RLRKVSHQGY…DLSSRVSRAR (117 aa). Asparagine 271 carries an N-linked (GlcNAc...) asparagine glycan. The short motif at 357–360 is the Prevents secretion from ER element; sequence HNEL.

Belongs to the alpha-2-MRAP family. As to quaternary structure, interacts with the LRP1/alpha-2-macroglobulin receptor heavy and light chains; the interaction is transient and coincides with a reduction of ligand binding by the receptor. Interacts with LRP2/glycoprotein 330. Interacts with LRP1B; binding is followed by internalization and degradation. Interacts with LDLR. Interacts with SORL1. Interacts with LRP1; this interaction is followed by rapid internalization. In terms of processing, N-glycosylated. In terms of tissue distribution, highly expressed in PYS-2 parietal endoderm cells and in the kidney. The RNA level increased about 10-fold during differentiation of F9 embryonal carcinoma cells to parietal endoderm cells.

Its subcellular location is the rough endoplasmic reticulum lumen. It is found in the endoplasmic reticulum-Golgi intermediate compartment lumen. The protein resides in the golgi apparatus. The protein localises to the cis-Golgi network. It localises to the golgi apparatus lumen. Its subcellular location is the endosome lumen. It is found in the cell surface. Its function is as follows. Molecular chaperone for LDL receptor-related proteins that may regulate their ligand binding activity along the secretory pathway. In Mus musculus (Mouse), this protein is Alpha-2-macroglobulin receptor-associated protein (Lrpap1).